The primary structure comprises 736 residues: Catalase-peroxidase (736 aa).

Residues 1 to 10 (MDAKTDDKGA) show a composition bias toward basic and acidic residues. The disordered stretch occupies residues 1–26 (MDAKTDDKGAGKCPFSGGSHGHRNRD). The tryptophyl-tyrosyl-methioninium (Trp-Tyr) (with M-244) cross-link spans 96 to 218 (WHSAGTYRIT…LGAVQMGLIY (123 aa)). Catalysis depends on His-97, which acts as the Proton acceptor. Positions 218 to 244 (YVNPEGPNGNPDPVAAAKDIRETFARM) form a cross-link, tryptophyl-tyrosyl-methioninium (Tyr-Met) (with W-96). His-259 lines the heme b pocket.

The protein belongs to the peroxidase family. Peroxidase/catalase subfamily. As to quaternary structure, homodimer or homotetramer. The cofactor is heme b. In terms of processing, formation of the three residue Trp-Tyr-Met cross-link is important for the catalase, but not the peroxidase activity of the enzyme.

The enzyme catalyses H2O2 + AH2 = A + 2 H2O. The catalysed reaction is 2 H2O2 = O2 + 2 H2O. Its function is as follows. Bifunctional enzyme with both catalase and broad-spectrum peroxidase activity. In Rhodopseudomonas palustris (strain ATCC BAA-98 / CGA009), this protein is Catalase-peroxidase.